Here is an 845-residue protein sequence, read N- to C-terminus: Protein SPA1-RELATED 3 (845 aa).

Residues 1-19 show a composition bias toward polar residues; that stretch reads MEGSSNSNSRGFNTSGVSD. Disordered regions lie at residues 1-33 and 139-158; these read MEGSSNSNSRGFNTSGVSDRNTEFLPVERLTTR and CSDSGSDSLEDGPISQKEIG. Residues 1–297 form the Protein kinase domain; the sequence is MEGSSNSNSR…MSDLLQSEFI (297 aa). The stretch at 301–329 forms a coiled coil; sequence RDNLEEREAAIELRDRIEEQESLLEFLLL. 7 WD repeats span residues 532 to 571, 581 to 621, 624 to 664, 666 to 706, 710 to 748, 757 to 796, and 812 to 845; these read NSSNLVCALAFDREGELFATAGVNKKIKIFECNSIVNDNR, AGRS…LVTE, EHKK…SIGT, KTKA…IPLC, GHSKTVSYVKFVDSSTLVSSSTDNTLKLWDLSMSASGIN, GHTNLKNFVGLSVSDGYIATGSETNEVFVYHKAFPMPVMS, and DASQFISSICWRGQSSTLVAANSNGNIKILEMMT. Residues 685-699 carry the DWD box motif; the sequence is AFGSADHKVYYYDLR.

In terms of assembly, interacts with COP1 and CO.

Its subcellular location is the nucleus. Its function is as follows. Repressor of photomorphogenesis in the light. Probably part of the COP1/SPA E3 ubiquitin-protein ligase complex. The protein is Protein SPA1-RELATED 3 (SPA3) of Arabidopsis thaliana (Mouse-ear cress).